The sequence spans 504 residues: L-arabinose isomerase (504 aa).

Mn(2+) contacts are provided by glutamate 308, glutamate 335, histidine 352, and histidine 452.

This sequence belongs to the arabinose isomerase family. The cofactor is Mn(2+).

It carries out the reaction beta-L-arabinopyranose = L-ribulose. The protein operates within carbohydrate degradation; L-arabinose degradation via L-ribulose; D-xylulose 5-phosphate from L-arabinose (bacterial route): step 1/3. Catalyzes the conversion of L-arabinose to L-ribulose. The protein is L-arabinose isomerase of Bifidobacterium adolescentis (strain ATCC 15703 / DSM 20083 / NCTC 11814 / E194a).